Here is a 330-residue protein sequence, read N- to C-terminus: Olfactory receptor 5T9 (330 aa).

The Extracellular portion of the chain corresponds to 1-37 (MSIHSPGYTVRRIPVNNVTDTTMFILTGFTDDADLQV). Residue asparagine 17 is glycosylated (N-linked (GlcNAc...) asparagine). Residues 38-58 (LLFLLFFVIYLFTLIGNLGLV) traverse the membrane as a helical segment. Topologically, residues 59–66 (LLVIGDSR) are cytoplasmic. The helical transmembrane segment at 67–87 (LHNPMYYFLSVLSFLDACYST) threads the bilayer. The Extracellular segment spans residues 88 to 111 (VVTPKMLVNFISNDKSISYPGCVT). Residues cysteine 109 and cysteine 201 are joined by a disulfide bond. A helical membrane pass occupies residues 112–132 (EMFLFVTFGTTECFLLAAMAY). The Cytoplasmic portion of the chain corresponds to 133-145 (DRFVAIYNPLLYA). A helical transmembrane segment spans residues 146–166 (VKMSPRVYIPLIIACYSGGIM). Residues 167-208 (HATIHTVATFSLSFCASNEIRHVFCDIPPLLAISCSNTNINQ) are Extracellular-facing. A helical transmembrane segment spans residues 209–229 (LLLFYCVGSIEIITILIVLVS). The Cytoplasmic portion of the chain corresponds to 230 to 249 (YSFILFAILKMNSAEGRRKI). The chain crosses the membrane as a helical span at residues 250 to 270 (FSTCGSHLTGVSIYHGTILFM). Residues 271 to 283 (YVRPSSNYALEHD) lie on the Extracellular side of the membrane. The helical transmembrane segment at 284-304 (MIVSTFYTIVIPMLNPIIYSL) threads the bilayer. Over 305-330 (RNKDVKEAMKKIFERNFFMNKVHFKL) the chain is Cytoplasmic.

It belongs to the G-protein coupled receptor 1 family.

The protein resides in the cell membrane. Its function is as follows. Potential odorant receptor. The sequence is that of Olfactory receptor 5T9 from Mus musculus (Mouse).